Here is a 2194-residue protein sequence, read N- to C-terminus: Nucleosome-remodeling factor subunit NURF301-like (2194 aa).

A compositionally biased stretch (basic residues) spans 1-12; that stretch reads MAPPRGRSKRKH. The interval 1-137 is disordered; the sequence is MAPPRGRSKR…EEEESSDDEF (137 aa). The span at 60 to 79 shows a compositional bias: basic and acidic residues; it reads AQRETPSDAEEVEVKIEEIS. Positions 80–93 are enriched in polar residues; the sequence is VRSTPASTPAPKST. A compositionally biased stretch (basic residues) spans 94–112; it reads SKARGRPKKNPTPPRRKSL. Residues 118–137 are compositionally biased toward acidic residues; the sequence is DIIYMDEDSEEEEESSDDEF. DDT domains lie at 196 to 256 and 341 to 396; these read TASI…SDDE and VGKF…SAVR. Residues 347-392 form a PHD-type 1 zinc finger; that stretch reads DENCRVCGKSSGRVVGCTQCEAAFHVECSHLKPFPEVLVCNICKKN. Disordered regions lie at residues 1091–1122, 1158–1255, 1413–1433, 1657–1701, and 1834–1888; these read ESWL…SLDN, AKRK…PQPN, TSNF…PVYS, MRQE…SNDS, and ESIA…HTPG. Residues 1151-1187 are a coiled coil; sequence RAEAEKTAKRKLEATRKAQKAKEDEERRRIQQQQQRS. Positions 1158-1179 are enriched in basic and acidic residues; the sequence is AKRKLEATRKAQKAKEDEERRR. A compositionally biased stretch (polar residues) spans 1665–1684; that stretch reads TSGYDSSGNPIRSITSSGDT. Residues 1852-1861 are compositionally biased toward basic and acidic residues; sequence KSEDDRDKPE. DDT domains are found at residues 1883–1953 and 1948–2014; these read AFHT…EQER and IEEQ…AEGY. 2 consecutive PHD-type zinc fingers follow at residues 1899-1950 and 1959-2010; these read IEHC…CIEE and ALYC…CTRE. The Bromo domain maps to 2030–2134; the sequence is QLTRADYTHV…EVFDKKLIDV (105 aa).

It belongs to the BPTF family. In terms of assembly, part of a nucleosome remodeling factor-like (NURF-like) complex containing nurf-1 and isw-1.

The protein resides in the nucleus. Its function is as follows. Histone-binding component of a NURF-like (nucleosome remodeling factor-like) complex, which would catalyze ATP-dependent nucleosome sliding and facilitate transcription of chromatin. Involved in vulval cell fates. In Caenorhabditis elegans, this protein is Nucleosome-remodeling factor subunit NURF301-like (nurf-1).